We begin with the raw amino-acid sequence, 751 residues long: Translation initiation factor IF-2, chloroplastic (751 aa).

The disordered stretch occupies residues 86–156 (KKEKSKFRKD…KSKKQTSAKN (71 aa)). The span at 93–106 (RKDEDYDSLKREDN) shows a compositional bias: basic and acidic residues. Residues 129–143 (VSNTNTLNKKNVVKS) are compositionally biased toward low complexity. A tr-type G domain is found at 250 to 423 (KRPPVIAIMG…ILVSEIEDLK (174 aa)). Residues 259 to 266 (GHVDHGKT) form a G1 region. 259–266 (GHVDHGKT) provides a ligand contact to GTP. Positions 284-288 (GITQK) are G2. The interval 309–312 (DTPG) is G3. GTP contacts are provided by residues 309-313 (DTPGH) and 363-366 (NKID). Residues 363-366 (NKID) are G4. The tract at residues 399-401 (SAM) is G5.

Belongs to the TRAFAC class translation factor GTPase superfamily. Classic translation factor GTPase family. IF-2 subfamily.

The protein resides in the plastid. It localises to the chloroplast. In terms of biological role, one of the essential components for the initiation of protein synthesis. Protects formylmethionyl-tRNA from spontaneous hydrolysis and promotes its binding to the 30S ribosomal subunits. Also involved in the hydrolysis of GTP during the formation of the 70S ribosomal complex. The chain is Translation initiation factor IF-2, chloroplastic (infB) from Rhodomonas salina (Cryptomonas salina).